Reading from the N-terminus, the 573-residue chain is 60 kDa heat shock protein, mitochondrial (573 aa).

The transit peptide at 1–26 (MLRLPTVLRQMRPVSRALAPHLTRAY) directs the protein to the mitochondrion. Residue Lys31 is modified to N6-succinyllysine. Phosphoserine is present on residues Ser67 and Ser70. Residue Lys75 coordinates ATP. Lys75 is subject to N6-acetyllysine. Lys82 carries the N6-acetyllysine; alternate modification. Position 82 is an N6-succinyllysine; alternate (Lys82). Lys87 carries the post-translational modification N6-acetyllysine. At Tyr90 the chain carries Phosphotyrosine. Lys91 carries the N6-acetyllysine modification. Residue 111–115 (DGTTT) participates in ATP binding. The residue at position 125 (Lys125) is an N6-acetyllysine; alternate. Lys125 carries the post-translational modification N6-succinyllysine; alternate. Residue Lys130 is modified to N6-acetyllysine. Lys133 carries the post-translational modification N6-acetyllysine; alternate. Lys133 carries the N6-succinyllysine; alternate modification. At Lys133 the chain carries N6-malonyllysine; alternate. Position 156 is an N6-acetyllysine (Lys156). An N6-acetyllysine; alternate mark is found at Lys191, Lys202, Lys205, Lys218, and Lys236. 5 positions are modified to N6-succinyllysine; alternate: Lys191, Lys202, Lys205, Lys218, and Lys236. N6-acetyllysine is present on Lys249. Position 250 is an N6-acetyllysine; alternate (Lys250). Position 250 is an N6-succinyllysine; alternate (Lys250). 2 positions are modified to N6-acetyllysine: Lys269 and Lys292. An N6-succinyllysine modification is found at Lys301. Lys314 carries the post-translational modification N6-acetyllysine. Lys352 bears the N6-acetyllysine; alternate mark. An N6-succinyllysine; alternate modification is found at Lys352. N6-acetyllysine is present on residues Lys359 and Lys389. Lys396 is modified (N6-acetyllysine; alternate). At Lys396 the chain carries N6-succinyllysine; alternate. Ser410 carries the phosphoserine modification. Gly440 provides a ligand contact to ATP. An N6-acetyllysine; alternate modification is found at Lys455. Lys455 bears the N6-succinyllysine; alternate mark. Lys469 carries the N6-acetyllysine modification. At Lys481 the chain carries N6-acetyllysine; alternate. Lys481 carries the post-translational modification N6-succinyllysine; alternate. The residue at position 488 (Ser488) is a Phosphoserine. Asp520 is a binding site for ATP. Residue Lys551 forms a Glycyl lysine isopeptide (Lys-Gly) (interchain with G-Cter in SUMO2) linkage.

The protein belongs to the chaperonin (HSP60) family. Homoheptamer arranged in a ring structure. The functional units of these chaperonins consist of heptameric rings of the large subunit Hsp60, which function as a back-to-back double ring. Interacts with 2 heptameric Hsp10 rings to form the symmetrical football complex. Interacts with HRAS. Interacts with ATAD3A. Interacts with ETFBKMT and EEF1AKMT3. Interacts with MFHAS1.

Its subcellular location is the mitochondrion matrix. The catalysed reaction is ATP + H2O + a folded polypeptide = ADP + phosphate + an unfolded polypeptide.. Functionally, chaperonin implicated in mitochondrial protein import and macromolecular assembly. Together with Hsp10, facilitates the correct folding of imported proteins. May also prevent misfolding and promote the refolding and proper assembly of unfolded polypeptides generated under stress conditions in the mitochondrial matrix. The functional units of these chaperonins consist of heptameric rings of the large subunit Hsp60, which function as a back-to-back double ring. In a cyclic reaction, Hsp60 ring complexes bind one unfolded substrate protein per ring, followed by the binding of ATP and association with 2 heptameric rings of the co-chaperonin Hsp10. This leads to sequestration of the substrate protein in the inner cavity of Hsp60 where, for a certain period of time, it can fold undisturbed by other cell components. Synchronous hydrolysis of ATP in all Hsp60 subunits results in the dissociation of the chaperonin rings and the release of ADP and the folded substrate protein. This chain is 60 kDa heat shock protein, mitochondrial (Hspd1), found in Rattus norvegicus (Rat).